Consider the following 524-residue polypeptide: Lysine--tRNA ligase (524 aa).

Glu431 and Glu438 together coordinate Mg(2+).

This sequence belongs to the class-II aminoacyl-tRNA synthetase family. Homodimer. It depends on Mg(2+) as a cofactor.

It is found in the cytoplasm. The catalysed reaction is tRNA(Lys) + L-lysine + ATP = L-lysyl-tRNA(Lys) + AMP + diphosphate. The protein is Lysine--tRNA ligase (lysS) of Chlamydia muridarum (strain MoPn / Nigg).